Reading from the N-terminus, the 419-residue chain is Dual specificity protein phosphatase 7 (419 aa).

The tract at residues 1–41 is disordered; sequence MKNQLRGPPVRAHMSTSGAAAAGGTRAGSEPGAGSGSSAGI. The segment covering 15–30 has biased composition (low complexity); sequence STSGAAAAGGTRAGSE. Positions 31 to 41 are enriched in gly residues; it reads PGAGSGSSAGI. A Rhodanese domain is found at 68–187; it reads GGASLLLLDC…FQTEYSEHCE (120 aa). The tract at residues 216–240 is disordered; that stretch reads CSDGESDRELPSSATESDGSPVPSS. Residues 227 to 240 show a composition bias toward polar residues; that stretch reads SSATESDGSPVPSS. Positions 244–387 constitute a Tyrosine-protein phosphatase domain; the sequence is FPVQILPYLY…LLDFERTLGL (144 aa). Cys-331 serves as the catalytic Phosphocysteine intermediate. 331–337 is a substrate binding site; that stretch reads CLAGISR.

It belongs to the protein-tyrosine phosphatase family. Non-receptor class dual specificity subfamily. Interacts with MAPK1/ERK2; the interaction enhances DUSP7 phosphatase activity.

Its subcellular location is the cytoplasm. The catalysed reaction is O-phospho-L-tyrosyl-[protein] + H2O = L-tyrosyl-[protein] + phosphate. It catalyses the reaction O-phospho-L-seryl-[protein] + H2O = L-seryl-[protein] + phosphate. It carries out the reaction O-phospho-L-threonyl-[protein] + H2O = L-threonyl-[protein] + phosphate. With respect to regulation, strongly inhibited by sodium orthovanadate. Functionally, dual specificity protein phosphatase. Shows high activity towards MAPK1/ERK2. Also has lower activity towards MAPK14 and MAPK8. In arrested oocytes, plays a role in meiotic resumption. Promotes nuclear envelope breakdown and activation of the CDK1/Cyclin-B complex in oocytes, probably by dephosphorylating and inactivating the conventional protein kinase C (cPKC) isozyme PRKCB. May also inactivate PRKCA and/or PRKCG. Also important in oocytes for normal chromosome alignment on the metaphase plate and progression to anaphase, where it might regulate activity of the spindle-assembly checkpoint (SAC) complex. This chain is Dual specificity protein phosphatase 7, found in Rattus norvegicus (Rat).